We begin with the raw amino-acid sequence, 249 residues long: Enolase-phosphatase E1 (249 aa).

Positions 15 and 17 each coordinate Mg(2+). Substrate-binding positions include S146–S147 and K180. D205 is a Mg(2+) binding site.

This sequence belongs to the HAD-like hydrolase superfamily. MasA/MtnC family. Monomer. Requires Mg(2+) as cofactor.

The protein localises to the cytoplasm. Its subcellular location is the nucleus. It catalyses the reaction 5-methylsulfanyl-2,3-dioxopentyl phosphate + H2O = 1,2-dihydroxy-5-(methylsulfanyl)pent-1-en-3-one + phosphate. It participates in amino-acid biosynthesis; L-methionine biosynthesis via salvage pathway; L-methionine from S-methyl-5-thio-alpha-D-ribose 1-phosphate: step 3/6. It functions in the pathway amino-acid biosynthesis; L-methionine biosynthesis via salvage pathway; L-methionine from S-methyl-5-thio-alpha-D-ribose 1-phosphate: step 4/6. Bifunctional enzyme that catalyzes the enolization of 2,3-diketo-5-methylthiopentyl-1-phosphate (DK-MTP-1-P) into the intermediate 2-hydroxy-3-keto-5-methylthiopentenyl-1-phosphate (HK-MTPenyl-1-P), which is then dephosphorylated to form the acireductone 1,2-dihydroxy-3-keto-5-methylthiopentene (DHK-MTPene). The polypeptide is Enolase-phosphatase E1 (Caenorhabditis briggsae).